Here is a 240-residue protein sequence, read N- to C-terminus: Phosphoribosylaminoimidazole-succinocarboxamide synthase (240 aa).

It belongs to the SAICAR synthetase family.

It catalyses the reaction 5-amino-1-(5-phospho-D-ribosyl)imidazole-4-carboxylate + L-aspartate + ATP = (2S)-2-[5-amino-1-(5-phospho-beta-D-ribosyl)imidazole-4-carboxamido]succinate + ADP + phosphate + 2 H(+). It functions in the pathway purine metabolism; IMP biosynthesis via de novo pathway; 5-amino-1-(5-phospho-D-ribosyl)imidazole-4-carboxamide from 5-amino-1-(5-phospho-D-ribosyl)imidazole-4-carboxylate: step 1/2. In Anoxybacillus flavithermus (strain DSM 21510 / WK1), this protein is Phosphoribosylaminoimidazole-succinocarboxamide synthase.